Here is a 57-residue protein sequence, read N- to C-terminus: COP9 signalosome complex subunit 9 (57 aa).

This sequence belongs to the CSN9 family. As to quaternary structure, component of the CSN complex, probably composed of cops1, cops2, cops3, cops4, cops5, cops6, cops7, cops8 and cops9.

The protein localises to the nucleus. It localises to the cytoplasm. Its subcellular location is the nucleoplasm. In terms of biological role, component of the COP9 signalosome complex (CSN), a complex involved in various cellular and developmental processes. The CSN complex is an essential regulator of the ubiquitin (Ubl) conjugation pathway by mediating the deneddylation of the cullin subunits of SCF-type E3 ligase complexes, leading to decrease the Ubl ligase activity. May play a role in cell proliferation. This Xenopus laevis (African clawed frog) protein is COP9 signalosome complex subunit 9.